The primary structure comprises 231 residues: Orotidine 5'-phosphate decarboxylase (231 aa).

Substrate contacts are provided by residues Asp12, Lys34, 61–70 (DMKLLDIDNT), Thr116, Arg177, Gln186, Gly206, and Arg207. Lys63 functions as the Proton donor in the catalytic mechanism.

This sequence belongs to the OMP decarboxylase family. Type 1 subfamily. In terms of assembly, homodimer.

The catalysed reaction is orotidine 5'-phosphate + H(+) = UMP + CO2. Its pathway is pyrimidine metabolism; UMP biosynthesis via de novo pathway; UMP from orotate: step 2/2. In terms of biological role, catalyzes the decarboxylation of orotidine 5'-monophosphate (OMP) to uridine 5'-monophosphate (UMP). This chain is Orotidine 5'-phosphate decarboxylase, found in Allorhizobium ampelinum (strain ATCC BAA-846 / DSM 112012 / S4) (Agrobacterium vitis (strain S4)).